Reading from the N-terminus, the 103-residue chain is Small ubiquitin-related modifier 2 (103 aa).

In terms of domain architecture, Ubiquitin-like spans 15 to 92; sequence AHINLKVKGQ…IDAMLHQTGG (78 aa). A Glycyl lysine isopeptide (Gly-Lys) (interchain with K-? in acceptor proteins) cross-link involves residue Gly-92.

It belongs to the ubiquitin family. SUMO subfamily. In terms of assembly, interacts with SAE2, SCE1, SIZ1 and MMS21. Interacts with HSFA2. Covalently attached to ABI5, FLD, GTE3, HSFA2 and ICE1.

The protein localises to the nucleus. Its subcellular location is the cytoplasm. In terms of biological role, ubiquitin-like protein which can be covalently attached to target lysines as a monomer. Does not seem to be involved in protein degradation and may function as an antagonist of ubiquitin in the degradation process. Required for the massive protein sumoylation in the nucleus induced by heat shock and controlled by SIZ1. The sequence is that of Small ubiquitin-related modifier 2 from Arabidopsis thaliana (Mouse-ear cress).